A 523-amino-acid polypeptide reads, in one-letter code: Sorting nexin-2 (523 aa).

A disordered region spans residues Met-1–Thr-104. Composition is skewed to low complexity over residues Leu-27 to Pro-48 and Ser-93 to Thr-104. Phosphoserine is present on Ser-97. Residues Thr-101 and Thr-104 each carry the phosphothreonine modification. 2 positions are modified to phosphoserine: Ser-117 and Ser-119. The PX domain occupies Phe-140–Arg-269. Arg-183, Ser-185, Lys-211, and Arg-235 together coordinate a 1,2-diacyl-sn-glycero-3-phospho-(1D-myo-inositol-3-phosphate). Ser-185 carries the phosphoserine modification. The interval Gln-260–Ala-523 is interaction with RhoG. The residue at position 277 (Ser-277) is a Phosphoserine. Residues Gly-278–Met-295 are membrane-binding amphipathic helix. One can recognise a BAR domain in the interval Met-299 to Ala-523. The residue at position 473 (Lys-473) is an N6-acetyllysine.

It belongs to the sorting nexin family. Predominantly forms heterodimers with BAR domain-containing sorting nexins SNX5, SNX6 and SNX32; can self-associate to form homodimers. The heterodimers are proposed to self-assemble into helical arrays on the membrane to stabilize and expand local membrane curvature underlying endosomal tubule formation. Thought to be a component of the originally described retromer complex (also called SNX-BAR retromer) which is a pentamer containing the heterotrimeric retromer cargo-selective complex (CSC), also described as vacuolar protein sorting subcomplex (VPS), and a heterodimeric membrane-deforming subcomplex formed between SNX1 or SNX2 and SNX5 or SNX6 (also called SNX-BAR subcomplex); the respective CSC and SNX-BAR subcomplexes associate with low affinity. Interacts with SNX5, SNX6, SNX32, VPS26A, VPS29, VPS35, FNBP1, KALRN, RHOG (GDP-bound form).

It localises to the early endosome membrane. The protein resides in the cell projection. It is found in the lamellipodium. Involved in several stages of intracellular trafficking. Interacts with membranes containing phosphatidylinositol 3-phosphate (PtdIns(3P)) or phosphatidylinositol 3,5-bisphosphate (PtdIns(3,5)P2). Acts in part as component of the retromer membrane-deforming SNX-BAR subcomplex. The SNX-BAR retromer mediates retrograde transport of cargo proteins from endosomes to the trans-Golgi network (TGN) and is involved in endosome-to-plasma membrane transport for cargo protein recycling. The SNX-BAR subcomplex functions to deform the donor membrane into a tubular profile called endosome-to-TGN transport carrier (ETC). Can sense membrane curvature and has in vitro vesicle-to-membrane remodeling activity. Required for retrograde endosome-to-TGN transport of TGN38. Promotes KALRN- and RHOG-dependent but retromer-independent membrane remodeling such as lamellipodium formation; the function is dependent on GEF activity of KALRN. This Pongo abelii (Sumatran orangutan) protein is Sorting nexin-2 (SNX2).